The chain runs to 209 residues: Claudin-4 (209 aa).

The Cytoplasmic segment spans residues 1 to 7 (MASMGLQ). Positions 1-103 (MASMGLQVMG…GVLLSVVGGK (103 aa)) are interaction with EPHA2. The chain crosses the membrane as a helical span at residues 8 to 28 (VMGIALAVLGWLAVMLCCALP). The Extracellular segment spans residues 29–81 (MWRVTAFIGSNIVTSQTIWEGLWMNCVVQSTGQMQCKVYDSLLALPQDLQAAR). Cys54 and Cys64 are disulfide-bonded. Residues 82 to 102 (ALVIISIIVAALGVLLSVVGG) traverse the membrane as a helical segment. The Cytoplasmic segment spans residues 103 to 117 (KCTNCLEDESAKAKT). The helical transmembrane segment at 118 to 138 (MIVAGVVFLLAGLMVIVPVSW) threads the bilayer. Residues 139 to 160 (TAHNIIQDFYNPLVASGQKREM) are Extracellular-facing. Residues 161–181 (GASLYVGWAASGLLLLGGGLL) form a helical membrane-spanning segment. At 182–209 (CCNCPPRTDKPYSAKYSAARSAAASNYV) the chain is on the cytoplasmic side. A Phosphotyrosine; by EPHA2 modification is found at Tyr208. The interval 208–209 (YV) is interactions with TJP1, TJP2 and TJP3.

It belongs to the claudin family. As to quaternary structure, can form heteropolymeric strands with other claudins. Interacts with CLDN8. Interacts with CLDN1. Directly interacts with TJP1/ZO-1. Interacts with TJP2/ZO-2 and TJP3/ZO-3. Interacts with EPHA2; phosphorylates CLDN4 and may regulate tight junctions. (Microbial infection) Interacts (via both extracellular domains) with Clostridium perfringens enterotoxin CPE; the interaction may disrupt claudin assembly in tight junctions. Phosphorylated. Phosphorylation by EPHA2 is stimulated by EFNA1 and alters interaction with TJP1.

It localises to the cell junction. The protein localises to the tight junction. The protein resides in the cell membrane. It catalyses the reaction chloride(in) = chloride(out). The enzyme catalyses bromide(in) = bromide(out). It carries out the reaction iodide(out) = iodide(in). The catalysed reaction is fluoride(in) = fluoride(out). Can associate with other claudins to regulate tight junction structural and functional strand dynamics. May coassemble with CLDN8 into tight junction strands containing anion-selective channels that convey paracellular chloride permeability in renal collecting ducts. May integrate into CLDN3 strands to modulate localized tight junction barrier properties. May disrupt strand assembly of channel-forming CLDN2 and CLDN15 and inhibit cation conductance. Cannot form tight junction strands on its own. This Homo sapiens (Human) protein is Claudin-4.